Here is a 362-residue protein sequence, read N- to C-terminus: Phosphoserine aminotransferase (362 aa).

Arg43 provides a ligand contact to L-glutamate. Pyridoxal 5'-phosphate contacts are provided by residues 77-78 (AR), Trp103, Thr153, Asp173, and Gln196. Lys197 bears the N6-(pyridoxal phosphate)lysine mark.

The protein belongs to the class-V pyridoxal-phosphate-dependent aminotransferase family. SerC subfamily. In terms of assembly, homodimer. The cofactor is pyridoxal 5'-phosphate.

Its subcellular location is the cytoplasm. It carries out the reaction O-phospho-L-serine + 2-oxoglutarate = 3-phosphooxypyruvate + L-glutamate. The enzyme catalyses 4-(phosphooxy)-L-threonine + 2-oxoglutarate = (R)-3-hydroxy-2-oxo-4-phosphooxybutanoate + L-glutamate. It functions in the pathway amino-acid biosynthesis; L-serine biosynthesis; L-serine from 3-phospho-D-glycerate: step 2/3. Its pathway is cofactor biosynthesis; pyridoxine 5'-phosphate biosynthesis; pyridoxine 5'-phosphate from D-erythrose 4-phosphate: step 3/5. Functionally, catalyzes the reversible conversion of 3-phosphohydroxypyruvate to phosphoserine and of 3-hydroxy-2-oxo-4-phosphonooxybutanoate to phosphohydroxythreonine. The sequence is that of Phosphoserine aminotransferase from Legionella pneumophila (strain Corby).